A 165-amino-acid polypeptide reads, in one-letter code: uncharacterized protein (165 aa).

The protein belongs to the SixA phosphatase family.

This is an uncharacterized protein from Picosynechococcus sp. (strain ATCC 27264 / PCC 7002 / PR-6) (Agmenellum quadruplicatum).